The sequence spans 199 residues: Imidazoleglycerol-phosphate dehydratase (199 aa).

This sequence belongs to the imidazoleglycerol-phosphate dehydratase family.

It is found in the cytoplasm. It carries out the reaction D-erythro-1-(imidazol-4-yl)glycerol 3-phosphate = 3-(imidazol-4-yl)-2-oxopropyl phosphate + H2O. It participates in amino-acid biosynthesis; L-histidine biosynthesis; L-histidine from 5-phospho-alpha-D-ribose 1-diphosphate: step 6/9. The protein is Imidazoleglycerol-phosphate dehydratase of Rhodospirillum rubrum (strain ATCC 11170 / ATH 1.1.1 / DSM 467 / LMG 4362 / NCIMB 8255 / S1).